Consider the following 299-residue polypeptide: UDP-N-acetylenolpyruvoylglucosamine reductase (299 aa).

The FAD-binding PCMH-type domain maps to 21-189 (RVGGPAQWLL…LSARFRLEPG (169 aa)). Arginine 168 is a catalytic residue. Serine 219 functions as the Proton donor in the catalytic mechanism. The active site involves glutamate 289.

Belongs to the MurB family. Requires FAD as cofactor.

Its subcellular location is the cytoplasm. It carries out the reaction UDP-N-acetyl-alpha-D-muramate + NADP(+) = UDP-N-acetyl-3-O-(1-carboxyvinyl)-alpha-D-glucosamine + NADPH + H(+). It participates in cell wall biogenesis; peptidoglycan biosynthesis. Functionally, cell wall formation. In Parasynechococcus marenigrum (strain WH8102), this protein is UDP-N-acetylenolpyruvoylglucosamine reductase.